The following is a 151-amino-acid chain: Thymosin beta (151 aa).

4 repeat units span residues Leu-24–Thr-29, Leu-62–Val-67, Leu-100–Thr-105, and Leu-134–Thr-139. The tract at residues Leu-24 to Thr-139 is 4 X 6 AA repeat of L-[KH]-[KSH]-[VT]-[EP]-[TV].

The protein belongs to the thymosin beta family. As to quaternary structure, interacts (via repeats 1, 2 and 4) with G-actin in a 1:3 ratio. Interacts (via repeats 2 and 3) with F-actin. In terms of tissue distribution, at the comma stage, enriched in the developing nerve ring (at protein level). Ubiquitously expressed in larvae and adults with enrichment in the spermatheca, the intestinal tract and the posterior bulb of the pharynx (at protein level). Expressed in oocytes and in the gonad (at protein level).

The protein localises to the cytoplasm. It localises to the cell cortex. Its subcellular location is the cell junction. It is found in the cytoskeleton. Plays an important role in the organization of the cytoskeleton by regulating actin polymerization in two ways. Firstly, by binding to and sequestering actin monomers (G actin) inhibits actin polymerization. Secondly, by binding directly filamentous actin (F actin) promotes actin polymerization. Regulates the formation of cortical actin in oocytes conferring them enough rigidity to sustain the contractions during ovulation. This Caenorhabditis elegans protein is Thymosin beta.